Consider the following 157-residue polypeptide: 17.8 kDa class I heat shock protein (157 aa).

Positions 43 to 157 (ETAAFVNTHI…PEVKAIDISG (115 aa)) constitute a sHSP domain.

The protein belongs to the small heat shock protein (HSP20) family. As to quaternary structure, forms oligomeric structures.

It is found in the cytoplasm. The chain is 17.8 kDa class I heat shock protein from Daucus carota (Wild carrot).